A 292-amino-acid polypeptide reads, in one-letter code: N-acetylneuraminate lyase (292 aa).

2 residues coordinate aceneuramate: serine 47 and threonine 48. Residue tyrosine 136 is the Proton donor of the active site. Lysine 164 serves as the catalytic Schiff-base intermediate with substrate. Aceneuramate contacts are provided by threonine 166, glycine 188, aspartate 190, glutamate 191, and serine 207.

The protein belongs to the DapA family. NanA subfamily. Homotetramer.

Its subcellular location is the cytoplasm. It carries out the reaction aceneuramate = aldehydo-N-acetyl-D-mannosamine + pyruvate. Its pathway is amino-sugar metabolism; N-acetylneuraminate degradation; D-fructose 6-phosphate from N-acetylneuraminate: step 1/5. Its function is as follows. Catalyzes the reversible aldol cleavage of N-acetylneuraminic acid (sialic acid; Neu5Ac) to form pyruvate and N-acetylmannosamine (ManNAc) via a Schiff base intermediate. The chain is N-acetylneuraminate lyase from Actinobacillus pleuropneumoniae serotype 3 (strain JL03).